Reading from the N-terminus, the 255-residue chain is Acetylglutamate kinase (255 aa).

Substrate is bound by residues 40–41, Arg-62, and Asn-153; that span reads GG.

This sequence belongs to the acetylglutamate kinase family. ArgB subfamily.

It is found in the cytoplasm. The enzyme catalyses N-acetyl-L-glutamate + ATP = N-acetyl-L-glutamyl 5-phosphate + ADP. It participates in amino-acid biosynthesis; L-arginine biosynthesis; N(2)-acetyl-L-ornithine from L-glutamate: step 2/4. Its function is as follows. Catalyzes the ATP-dependent phosphorylation of N-acetyl-L-glutamate. The sequence is that of Acetylglutamate kinase from Bacillus anthracis (strain A0248).